We begin with the raw amino-acid sequence, 600 residues long: Aspartate--tRNA(Asp/Asn) ligase (600 aa).

Glu174 serves as a coordination point for L-aspartate. Residues 198–201 (QLFK) are aspartate. Arg220 provides a ligand contact to L-aspartate. Residues 220 to 222 (RDE) and Gln229 contribute to the ATP site. His457 lines the L-aspartate pocket. Residue Glu491 participates in ATP binding. Residue Arg498 coordinates L-aspartate. 543–546 (GLDR) contributes to the ATP binding site.

It belongs to the class-II aminoacyl-tRNA synthetase family. Type 1 subfamily. As to quaternary structure, homodimer.

The protein resides in the cytoplasm. It catalyses the reaction tRNA(Asx) + L-aspartate + ATP = L-aspartyl-tRNA(Asx) + AMP + diphosphate. In terms of biological role, aspartyl-tRNA synthetase with relaxed tRNA specificity since it is able to aspartylate not only its cognate tRNA(Asp) but also tRNA(Asn). Reaction proceeds in two steps: L-aspartate is first activated by ATP to form Asp-AMP and then transferred to the acceptor end of tRNA(Asp/Asn). The protein is Aspartate--tRNA(Asp/Asn) ligase of Burkholderia orbicola (strain MC0-3).